The following is a 130-amino-acid chain: Albumin-1 F (130 aa).

A signal peptide spans 1–26; it reads MASVKLASLIVLFATLGMFLTKNVGA. Disulfide bonds link Cys-29–Cys-46, Cys-33–Cys-48, and Cys-41–Cys-58. 2 propeptides span residues 64 to 69 and 123 to 130; these read VFLRTN and LLKSVSTA.

Post-translationally, the C-terminal glycine may be removed from PA1b.

Functionally, PA1b binds to basic 7S globulin (BG) and stimulates its phosphorylation activity. Involved in the signal transduction system to regulate the growth and differentiation as a hormone peptide. Toxic to various insects through binding to a high affinity binding site in the insect gut. This chain is Albumin-1 F, found in Pisum sativum (Garden pea).